Here is a 123-residue protein sequence, read N- to C-terminus: uncharacterized protein (123 aa).

Over residues 31–57 (KLRTEAKKSKDKERTKEKEKHESLAKE) the composition is skewed to basic and acidic residues. Residues 31–58 (KLRTEAKKSKDKERTKEKEKHESLAKEK) are disordered. Residues 91-111 (IIIFLLILLVSGLMVGIFFGI) form a helical membrane-spanning segment.

Its subcellular location is the membrane. This is an uncharacterized protein from Mycoplasma genitalium (strain ATCC 33530 / DSM 19775 / NCTC 10195 / G37) (Mycoplasmoides genitalium).